The chain runs to 161 residues: Urocortin-3 (161 aa).

The first 21 residues, 1-21 (MLMPVHFLLLLLLLLGGPRTG), serve as a signal peptide directing secretion. A propeptide spanning residues 22–118 (LPHKFYKAKP…QDTAKSPHRT (97 aa)) is cleaved from the precursor. The interval 64 to 118 (SRDASSGEEEEGKEKKTFPISGARGGARGTRYRYVSQAQPRGKPRQDTAKSPHRT) is disordered. An Isoleucine amide modification is found at isoleucine 157.

It belongs to the sauvagine/corticotropin-releasing factor/urotensin I family. Binds with high affinity to CRF receptors 2-alpha and 2-beta.

The protein resides in the secreted. Suppresses food intake, delays gastric emptying and decreases heat-induced edema. Might represent an endogenous ligand for maintaining homeostasis after stress. The protein is Urocortin-3 (UCN3) of Homo sapiens (Human).